The sequence spans 155 residues: 3-hydroxyacyl-[acyl-carrier-protein] dehydratase FabZ (155 aa).

H58 is a catalytic residue.

This sequence belongs to the thioester dehydratase family. FabZ subfamily.

Its subcellular location is the cytoplasm. The catalysed reaction is a (3R)-hydroxyacyl-[ACP] = a (2E)-enoyl-[ACP] + H2O. Functionally, involved in unsaturated fatty acids biosynthesis. Catalyzes the dehydration of short chain beta-hydroxyacyl-ACPs and long chain saturated and unsaturated beta-hydroxyacyl-ACPs. This Rhizobium etli (strain CIAT 652) protein is 3-hydroxyacyl-[acyl-carrier-protein] dehydratase FabZ.